The following is a 1083-amino-acid chain: Error-prone DNA polymerase (1083 aa).

It belongs to the DNA polymerase type-C family. DnaE2 subfamily.

It localises to the cytoplasm. The enzyme catalyses DNA(n) + a 2'-deoxyribonucleoside 5'-triphosphate = DNA(n+1) + diphosphate. Functionally, DNA polymerase involved in damage-induced mutagenesis and translesion synthesis (TLS). It is not the major replicative DNA polymerase. This Xanthomonas axonopodis pv. citri (strain 306) protein is Error-prone DNA polymerase.